The chain runs to 180 residues: ATP-dependent protease subunit HslV (180 aa).

T7 is an active-site residue. Na(+) is bound by residues A163, C166, and T169.

It belongs to the peptidase T1B family. HslV subfamily. A double ring-shaped homohexamer of HslV is capped on each side by a ring-shaped HslU homohexamer. The assembly of the HslU/HslV complex is dependent on binding of ATP.

Its subcellular location is the cytoplasm. It catalyses the reaction ATP-dependent cleavage of peptide bonds with broad specificity.. With respect to regulation, allosterically activated by HslU binding. Protease subunit of a proteasome-like degradation complex believed to be a general protein degrading machinery. This Cytophaga hutchinsonii (strain ATCC 33406 / DSM 1761 / CIP 103989 / NBRC 15051 / NCIMB 9469 / D465) protein is ATP-dependent protease subunit HslV.